The primary structure comprises 278 residues: Urease accessory protein UreD (278 aa).

It belongs to the UreD family. UreD, UreF and UreG form a complex that acts as a GTP-hydrolysis-dependent molecular chaperone, activating the urease apoprotein by helping to assemble the nickel containing metallocenter of UreC. The UreE protein probably delivers the nickel.

The protein resides in the cytoplasm. Required for maturation of urease via the functional incorporation of the urease nickel metallocenter. This chain is Urease accessory protein UreD, found in Deinococcus radiodurans (strain ATCC 13939 / DSM 20539 / JCM 16871 / CCUG 27074 / LMG 4051 / NBRC 15346 / NCIMB 9279 / VKM B-1422 / R1).